The following is a 264-amino-acid chain: Flagellar brake protein YcgR 1 (264 aa).

Residues 132-249 (QRREFFRLES…RLAMIERYIA (118 aa)) enclose the PilZ domain.

Belongs to the YcgR family. In terms of assembly, monomer. Interacts with the flagellar basal bodies.

It localises to the bacterial flagellum basal body. In terms of biological role, acts as a flagellar brake, regulating swimming and swarming in a bis-(3'-5') cyclic diguanylic acid (c-di-GMP)-dependent manner. Binds 1 c-di-GMP dimer per subunit. Increasing levels of c-di-GMP lead to decreased motility. The chain is Flagellar brake protein YcgR 1 from Dechloromonas aromatica (strain RCB).